Reading from the N-terminus, the 233-residue chain is Probable septum site-determining protein MinC (233 aa).

A disordered region spans residues 98–123 (LTEGKEKAPRPAPSEPTPPPPPVANQ). Over residues 107–120 (RPAPSEPTPPPPPV) the composition is skewed to pro residues.

This sequence belongs to the MinC family. Interacts with MinD and FtsZ.

Its function is as follows. Cell division inhibitor that blocks the formation of polar Z ring septums. Rapidly oscillates between the poles of the cell to destabilize FtsZ filaments that have formed before they mature into polar Z rings. Prevents FtsZ polymerization. The polypeptide is Probable septum site-determining protein MinC (Klebsiella pneumoniae (strain 342)).